The chain runs to 594 residues: Elongation factor 4 (594 aa).

The 183-residue stretch at 2-184 folds into the tr-type G domain; it reads KNIRNFSIIA…TIVAKVPAPE (183 aa). Residues 14–19 and 131–134 each bind GTP; these read DHGKST and NKID.

It belongs to the TRAFAC class translation factor GTPase superfamily. Classic translation factor GTPase family. LepA subfamily.

It is found in the cell inner membrane. It catalyses the reaction GTP + H2O = GDP + phosphate + H(+). In terms of biological role, required for accurate and efficient protein synthesis under certain stress conditions. May act as a fidelity factor of the translation reaction, by catalyzing a one-codon backward translocation of tRNAs on improperly translocated ribosomes. Back-translocation proceeds from a post-translocation (POST) complex to a pre-translocation (PRE) complex, thus giving elongation factor G a second chance to translocate the tRNAs correctly. Binds to ribosomes in a GTP-dependent manner. The chain is Elongation factor 4 from Francisella philomiragia subsp. philomiragia (strain ATCC 25017 / CCUG 19701 / FSC 153 / O#319-036).